Here is a 147-residue protein sequence, read N- to C-terminus: Protein phosphatase 1 regulatory subunit 14A (147 aa).

Basic residues predominate over residues 1–11; it reads MAAQRLGKRVL. The tract at residues 1-37 is disordered; the sequence is MAAQRLGKRVLSKLQSPSRARGPGGSPGGLQKRHARV. Ser-26 bears the Phosphoserine mark. An inhibitory region spans residues 35–120; it reads ARVTVKYDRR…LLVKLRGLHK (86 aa). Position 38 is a phosphothreonine (Thr-38). The segment at 118-147 is disordered; it reads LHKQPGLRQPSPSGDGSLSPRQDRARTAPP. Residues 127–137 are compositionally biased toward polar residues; it reads PSPSGDGSLSP. Ser-128, Ser-134, and Ser-136 each carry phosphoserine. Over residues 138–147 the composition is skewed to basic and acidic residues; sequence RQDRARTAPP.

It belongs to the PP1 inhibitor family. Post-translationally, phosphorylation of Thr-38 induces a conformation change. In terms of tissue distribution, detected in aorta smooth muscle and bladder.

The protein resides in the cytoplasm. Its function is as follows. Inhibitor of PPP1CA. Has over 1000-fold higher inhibitory activity when phosphorylated, creating a molecular switch for regulating the phosphorylation status of PPP1CA substrates and smooth muscle contraction. The polypeptide is Protein phosphatase 1 regulatory subunit 14A (CPI17) (Sus scrofa (Pig)).